A 527-amino-acid polypeptide reads, in one-letter code: ATP synthase subunit alpha (527 aa).

172–179 lines the ATP pocket; the sequence is GDRQTGKT.

It belongs to the ATPase alpha/beta chains family. F-type ATPases have 2 components, CF(1) - the catalytic core - and CF(0) - the membrane proton channel. CF(1) has five subunits: alpha(3), beta(3), gamma(1), delta(1), epsilon(1). CF(0) has three main subunits: a(1), b(2) and c(9-12). The alpha and beta chains form an alternating ring which encloses part of the gamma chain. CF(1) is attached to CF(0) by a central stalk formed by the gamma and epsilon chains, while a peripheral stalk is formed by the delta and b chains.

The protein localises to the cell inner membrane. It carries out the reaction ATP + H2O + 4 H(+)(in) = ADP + phosphate + 5 H(+)(out). Produces ATP from ADP in the presence of a proton gradient across the membrane. The alpha chain is a regulatory subunit. In Bacteroides thetaiotaomicron (strain ATCC 29148 / DSM 2079 / JCM 5827 / CCUG 10774 / NCTC 10582 / VPI-5482 / E50), this protein is ATP synthase subunit alpha.